We begin with the raw amino-acid sequence, 150 residues long: Large ribosomal subunit protein bL9 (150 aa).

Belongs to the bacterial ribosomal protein bL9 family.

Its function is as follows. Binds to the 23S rRNA. In Idiomarina loihiensis (strain ATCC BAA-735 / DSM 15497 / L2-TR), this protein is Large ribosomal subunit protein bL9.